The chain runs to 184 residues: ATP synthase subunit b, chloroplastic (184 aa).

A helical transmembrane segment spans residues 27–49 (LATNLINLSVVLGVLIFFGKGVL).

This sequence belongs to the ATPase B chain family. F-type ATPases have 2 components, F(1) - the catalytic core - and F(0) - the membrane proton channel. F(1) has five subunits: alpha(3), beta(3), gamma(1), delta(1), epsilon(1). F(0) has four main subunits: a(1), b(1), b'(1) and c(10-14). The alpha and beta chains form an alternating ring which encloses part of the gamma chain. F(1) is attached to F(0) by a central stalk formed by the gamma and epsilon chains, while a peripheral stalk is formed by the delta, b and b' chains.

The protein localises to the plastid. It is found in the chloroplast thylakoid membrane. In terms of biological role, f(1)F(0) ATP synthase produces ATP from ADP in the presence of a proton or sodium gradient. F-type ATPases consist of two structural domains, F(1) containing the extramembraneous catalytic core and F(0) containing the membrane proton channel, linked together by a central stalk and a peripheral stalk. During catalysis, ATP synthesis in the catalytic domain of F(1) is coupled via a rotary mechanism of the central stalk subunits to proton translocation. Component of the F(0) channel, it forms part of the peripheral stalk, linking F(1) to F(0). The sequence is that of ATP synthase subunit b, chloroplastic from Helianthus annuus (Common sunflower).